A 105-amino-acid chain; its full sequence is Small ribosomal subunit protein uS10 (105 aa).

This sequence belongs to the universal ribosomal protein uS10 family. As to quaternary structure, part of the 30S ribosomal subunit.

Involved in the binding of tRNA to the ribosomes. This Chlamydia muridarum (strain MoPn / Nigg) protein is Small ribosomal subunit protein uS10.